A 129-amino-acid polypeptide reads, in one-letter code: Small ribosomal subunit protein uS9 (129 aa).

Belongs to the universal ribosomal protein uS9 family.

The chain is Small ribosomal subunit protein uS9 from Nitratiruptor sp. (strain SB155-2).